The chain runs to 456 residues: MIWTRLPLYGPSKPSTGGWQPLRFDGGAFHVKGTAELARALLVLRLCAWPPLVTHGLAFQAWSQRLLGSRLSGALLRASIYGQFVAGETAEEVRNCVGQLQALGLQPLLAVPTEEEPDSTAKTSEVWYEENLSAMLRCVDLSRALVDAHGPARNSLMQLKVTALASTRLCKELSAWIQRPRGSSELSPERLAEAMDSGRNLQLSCLSTEQNQHLQASLSRLHRVAQHARAKCVRLLVDAEYTFINPALSLLVAALAVRWNSPEEGGPWVWNTYQAYLKDTHQRLEQDAEAAHKAGLAFGVKLVRGAYLDKERSMTQLQGKEDCTQPDYEATSRSYSRCLELMLRCVSNHGPPCHLMVASHNEESVRQATKRMWELGIPLDGPVCFGQLLGMCDHVSLALGQAGYMVYKSIPYGCLEEVIPYLIRRAQENRSVLQGARREQALLSQELWRRLLGRTA.

Residues lysine 310 and lysine 320 each carry the N6-acetyllysine modification.

It belongs to the proline oxidase family. The cofactor is FAD.

The enzyme catalyses trans-4-hydroxy-L-proline + a quinone = (3R,5S)-1-pyrroline-3-hydroxy-5-carboxylate + a quinol + H(+). The catalysed reaction is L-proline + a quinone = (S)-1-pyrroline-5-carboxylate + a quinol + H(+). Dehydrogenase that converts trans-4-L-hydroxyproline to delta-1-pyrroline-3-hydroxy-5-carboxylate (Hyp) using ubiquinone-10 as the terminal electron acceptor. Can also use proline as a substrate but with a very much lower efficiency. Does not react with other diastereomers of Hyp: trans-4-D-hydroxyproline and cis-4-L-hydroxyproline. Ubiquininone analogs such as menadione, duroquinone and ubiquinone-1 react more efficiently than oxygen as the terminal electron acceptor during catalysis. The sequence is that of Hydroxyproline dehydrogenase from Mus musculus (Mouse).